The following is a 428-amino-acid chain: Ammonium transporter AmtB (428 aa).

Positions 1–22 (MKIATIKTGLASLAMLPGLVMA) are cleaved as a signal peptide. Residues 23–32 (APAVADKADN) lie on the Periplasmic side of the membrane. A helical transmembrane segment spans residues 33–54 (AFMMICTALVLFMTIPGIALFY). At 55–65 (GGLIRGKNVLS) the chain is on the cytoplasmic side. The helical transmembrane segment at 66–90 (MLTQVTVTFALVCILWVVYGYSLAF) threads the bilayer. Topologically, residues 91–119 (GEGNNFFGNINWLMLKNIELTAVMGSIYQ) are periplasmic. A helical membrane pass occupies residues 120 to 142 (YIHVAFQGSFACITVGLIVGALA). The Cytoplasmic portion of the chain corresponds to 143–146 (ERIR). Residues 147-171 (FSAVLIFVVVWLTLSYIPIAHMVWG) traverse the membrane as a helical segment. At 172–185 (GGLLASHGALDFAG) the chain is on the periplasmic side. The chain crosses the membrane as a helical span at residues 186–201 (GTVVHINAAIAGLVGA). The Cytoplasmic portion of the chain corresponds to 202-221 (YLIGKRVGFGKEAFKPHNLP). A helical transmembrane segment spans residues 222 to 241 (MVFTGTAILYIGWFGFNAGS). Ser-241 is a binding site for NH4(+). Topologically, residues 242-248 (AGTANEI) are periplasmic. A helical membrane pass occupies residues 249-273 (AALAFVNTVVATAAAILGWIFGEWA). At 274 to 279 (LRGKPS) the chain is on the cytoplasmic side. The helical transmembrane segment at 280-300 (LLGACSGAIAGLVGVTPACGY) threads the bilayer. Topologically, residues 301–302 (IG) are periplasmic. The helical transmembrane segment at 303 to 321 (VGGALIIGVVAGLAGLWGV) threads the bilayer. The Cytoplasmic segment spans residues 322–333 (TMLKRLLRVDDP). Residues 334–355 (CDVFGVHGVCGIVGCIMTGIFA) traverse the membrane as a helical segment. The Periplasmic segment spans residues 356–370 (ASSLGGVGFAEGVTM). The chain crosses the membrane as a helical span at residues 371 to 399 (GHQLLVQLESIAITIVWSGVVAFIGYKLA). At 400 to 428 (DLTVGLRVPEEQEREGLDVNSHGENAYNA) the chain is on the cytoplasmic side.

It belongs to the ammonia transporter channel (TC 1.A.11.2) family. In terms of assembly, homotrimer. In response to elevation of the extracellular ammonium concentration, interacts and forms a complex with GlnK.

It localises to the cell inner membrane. In the presence of high extracellular ammonium concentrations, transport activity is inhibited by interaction with the regulatory protein GlnK. Formation of the GlnK-AmtB complex is influenced by intracellular pools of the effector molecules ATP, ADP, Mg(2+) and 2-oxoglutarate. The GlnK-AmtB interaction is also controlled by the level of intracellular glutamine and the uridylylation status of GlnK. Involved in the uptake of ammonium/ammonia (NH(4)(+)/NH(3)). Transport is electrogenic. Following sequestration of NH(4)(+) at the periplasmic face, NH(4)(+) is deprotonated and neutral NH(3) is transported into the cytoplasm. Neutral NH(3) and charged H(+) are carried separately across the membrane on a unique two-lane pathway, before recombining to NH(4)(+) inside the cell. The sequence is that of Ammonium transporter AmtB (amtB) from Escherichia coli O157:H7.